Consider the following 570-residue polypeptide: Conserved oligomeric Golgi complex subunit 8 (570 aa).

The protein belongs to the COG8 family. Component of the conserved oligomeric Golgi complex which is composed of eight different subunits and is required for normal Golgi morphology and localization.

It localises to the golgi apparatus membrane. Its function is as follows. Required for normal Golgi function. This Drosophila melanogaster (Fruit fly) protein is Conserved oligomeric Golgi complex subunit 8.